A 551-amino-acid polypeptide reads, in one-letter code: Adenylyl cyclase-associated protein (551 aa).

Residues 34–55 (SGHKPLPNMHRPSRDSNSQTHN) form a disordered region. Residue Ser92 is modified to Phosphoserine. Thr96 carries the phosphothreonine modification. Polar residues predominate over residues 288–300 (SASKTQAPSSGDS). 2 disordered regions span residues 288–333 (SASK…NKGD) and 348–395 (TSGL…PVKP). Residues 305 to 315 (LPPPPPPPPPS) show a composition bias toward pro residues. Residues 352-361 (RKVDKSEMTH) are compositionally biased toward basic and acidic residues. A C-CAP/cofactor C-like domain is found at 395–529 (PPRIELENTK…EEGDYAERAV (135 aa)).

The protein belongs to the CAP family.

In terms of biological role, the N-terminal domain binds to adenylyl cyclase, thereby enabling adenylyl cyclase to be activated by upstream regulatory signals, such as Ras. The C-terminal domain is required for normal cellular morphology and growth control. The chain is Adenylyl cyclase-associated protein (cap1) from Schizosaccharomyces pombe (strain 972 / ATCC 24843) (Fission yeast).